Consider the following 1175-residue polypeptide: Pyruvate carboxylase (1175 aa).

Residues 22 to 474 (NANKILVANR…WTTFIDDTPS (453 aa)) form the Biotin carboxylation domain. Positions 140, 224, and 259 each coordinate ATP. The ATP-grasp domain occupies 144-341 (RNLAGKCNVP…IVAAQIQIAA (198 aa)). The active site involves R316. The Pyruvate carboxyltransferase domain maps to 561–828 (CLIMDTTWRD…NTGITEQNAR (268 aa)). Substrate-binding positions include 569 to 573 (RDAHQ) and R642. Residue D570 participates in a divalent metal cation binding. A divalent metal cation contacts are provided by K738, H768, and H770. An N6-carboxylysine modification is found at K738. T902 lines the substrate pocket. The region spanning 1099–1174 (KADAHNPNEV…DAGDLICKIT (76 aa)) is the Biotinyl-binding domain. An N6-biotinyllysine modification is found at K1140.

Biotin serves as cofactor. Zn(2+) is required as a cofactor.

It is found in the cytoplasm. The catalysed reaction is hydrogencarbonate + pyruvate + ATP = oxaloacetate + ADP + phosphate + H(+). Its pathway is carbohydrate biosynthesis; gluconeogenesis. Pyruvate carboxylase catalyzes a 2-step reaction, involving the ATP-dependent carboxylation of the covalently attached biotin in the first step and the transfer of the carboxyl group to pyruvate in the second. The sequence is that of Pyruvate carboxylase (PYC) from Pichia angusta (Yeast).